We begin with the raw amino-acid sequence, 380 residues long: Putative 8-amino-7-oxononanoate synthase (380 aa).

R18 contacts substrate. A pyridoxal 5'-phosphate-binding site is contributed by 106 to 107 (GY). H131 is a substrate binding site. Pyridoxal 5'-phosphate-binding positions include S179, 205-208 (DEAH), and 236-239 (TFGK). Residue K239 is modified to N6-(pyridoxal phosphate)lysine. Substrate is bound at residue T352.

Belongs to the class-II pyridoxal-phosphate-dependent aminotransferase family. BioF subfamily. Homodimer. It depends on pyridoxal 5'-phosphate as a cofactor.

It catalyses the reaction 6-carboxyhexanoyl-[ACP] + L-alanine + H(+) = (8S)-8-amino-7-oxononanoate + holo-[ACP] + CO2. The protein operates within cofactor biosynthesis; biotin biosynthesis. Functionally, catalyzes the decarboxylative condensation of pimeloyl-[acyl-carrier protein] and L-alanine to produce 8-amino-7-oxononanoate (AON), [acyl-carrier protein], and carbon dioxide. This is Putative 8-amino-7-oxononanoate synthase (bioF) from Neisseria gonorrhoeae (strain NCCP11945).